Consider the following 160-residue polypeptide: Cyclic pyranopterin monophosphate synthase (160 aa).

Substrate-binding positions include 75 to 77 (LCH) and 113 to 114 (ME). Aspartate 128 is an active-site residue.

It belongs to the MoaC family. As to quaternary structure, homohexamer; trimer of dimers.

The enzyme catalyses (8S)-3',8-cyclo-7,8-dihydroguanosine 5'-triphosphate = cyclic pyranopterin phosphate + diphosphate. Its pathway is cofactor biosynthesis; molybdopterin biosynthesis. Its function is as follows. Catalyzes the conversion of (8S)-3',8-cyclo-7,8-dihydroguanosine 5'-triphosphate to cyclic pyranopterin monophosphate (cPMP). The polypeptide is Cyclic pyranopterin monophosphate synthase (Beijerinckia indica subsp. indica (strain ATCC 9039 / DSM 1715 / NCIMB 8712)).